A 234-amino-acid polypeptide reads, in one-letter code: Leucyl/phenylalanyl-tRNA--protein transferase (234 aa).

This sequence belongs to the L/F-transferase family.

The protein resides in the cytoplasm. It catalyses the reaction N-terminal L-lysyl-[protein] + L-leucyl-tRNA(Leu) = N-terminal L-leucyl-L-lysyl-[protein] + tRNA(Leu) + H(+). The catalysed reaction is N-terminal L-arginyl-[protein] + L-leucyl-tRNA(Leu) = N-terminal L-leucyl-L-arginyl-[protein] + tRNA(Leu) + H(+). The enzyme catalyses L-phenylalanyl-tRNA(Phe) + an N-terminal L-alpha-aminoacyl-[protein] = an N-terminal L-phenylalanyl-L-alpha-aminoacyl-[protein] + tRNA(Phe). Functions in the N-end rule pathway of protein degradation where it conjugates Leu, Phe and, less efficiently, Met from aminoacyl-tRNAs to the N-termini of proteins containing an N-terminal arginine or lysine. This is Leucyl/phenylalanyl-tRNA--protein transferase from Hahella chejuensis (strain KCTC 2396).